Reading from the N-terminus, the 202-residue chain is Orotate phosphoribosyltransferase (202 aa).

Residue 113–121 (EDIITTGGS) coordinates 5-phospho-alpha-D-ribose 1-diphosphate. Residues Thr117 and Arg145 each coordinate orotate.

It belongs to the purine/pyrimidine phosphoribosyltransferase family. PyrE subfamily. In terms of assembly, homodimer. Mg(2+) serves as cofactor.

It catalyses the reaction orotidine 5'-phosphate + diphosphate = orotate + 5-phospho-alpha-D-ribose 1-diphosphate. It functions in the pathway pyrimidine metabolism; UMP biosynthesis via de novo pathway; UMP from orotate: step 1/2. Its function is as follows. Catalyzes the transfer of a ribosyl phosphate group from 5-phosphoribose 1-diphosphate to orotate, leading to the formation of orotidine monophosphate (OMP). In Sulfurimonas denitrificans (strain ATCC 33889 / DSM 1251) (Thiomicrospira denitrificans (strain ATCC 33889 / DSM 1251)), this protein is Orotate phosphoribosyltransferase.